Reading from the N-terminus, the 208-residue chain is Nascent polypeptide-associated complex subunit alpha (208 aa).

Basic and acidic residues predominate over residues 1-19 (MSSSRIEELPDDDVPKTTV). 2 disordered regions span residues 1-50 (MSSS…HSRN) and 120-166 (QLAA…VFDA). Acidic residues predominate over residues 21-34 (DAADSSESEVEGAE). Positions 48 to 113 (SRNEKKARKA…AKIEDLNSQA (66 aa)) constitute an NAC-A/B domain. The span at 120–131 (QLAAAEAAGSNE) shows a compositional bias: low complexity. Over residues 132 to 154 (HAGHDHASHDHGKGKAVESADKK) the composition is skewed to basic and acidic residues. Over residues 155 to 164 (DEEEDDEEVF) the composition is skewed to acidic residues. In terms of domain architecture, UBA spans 169 to 208 (LEAKDIELVMAQASVSRNKAIKALKENDNDIVNSIMALSV).

This sequence belongs to the NAC-alpha family. In terms of assembly, part of the nascent polypeptide-associated complex (NAC), consisting of EGD2 and EGD1. NAC associates with ribosomes via EGD1.

It localises to the cytoplasm. Its subcellular location is the nucleus. Its function is as follows. Component of the nascent polypeptide-associated complex (NAC), a dynamic component of the ribosomal exit tunnel, protecting the emerging polypeptides from interaction with other cytoplasmic proteins to ensure appropriate nascent protein targeting. The NAC complex also promotes mitochondrial protein import by enhancing productive ribosome interactions with the outer mitochondrial membrane and blocks the inappropriate interaction of ribosomes translating non-secretory nascent polypeptides with translocation sites in the membrane of the endoplasmic reticulum. EGD2 may also be involved in transcription regulation. The protein is Nascent polypeptide-associated complex subunit alpha (EGD2) of Ajellomyces capsulatus (strain NAm1 / WU24) (Darling's disease fungus).